The primary structure comprises 170 residues: Adenine phosphoribosyltransferase (170 aa).

It belongs to the purine/pyrimidine phosphoribosyltransferase family. Homodimer.

It is found in the cytoplasm. The catalysed reaction is AMP + diphosphate = 5-phospho-alpha-D-ribose 1-diphosphate + adenine. It functions in the pathway purine metabolism; AMP biosynthesis via salvage pathway; AMP from adenine: step 1/1. Functionally, catalyzes a salvage reaction resulting in the formation of AMP, that is energically less costly than de novo synthesis. This is Adenine phosphoribosyltransferase from Lactococcus lactis subsp. cremoris (strain MG1363).